Consider the following 455-residue polypeptide: Argininosuccinate lyase (455 aa).

This sequence belongs to the lyase 1 family. Argininosuccinate lyase subfamily.

Its subcellular location is the cytoplasm. The enzyme catalyses 2-(N(omega)-L-arginino)succinate = fumarate + L-arginine. It functions in the pathway amino-acid biosynthesis; L-arginine biosynthesis; L-arginine from L-ornithine and carbamoyl phosphate: step 3/3. This chain is Argininosuccinate lyase, found in Roseiflexus sp. (strain RS-1).